Consider the following 77-residue polypeptide: Neurotoxin LmNaTx21.1 (77 aa).

The first 7 residues, 1–7 (LILVACL), serve as a signal peptide directing secretion. The LCN-type CS-alpha/beta domain occupies 16–76 (KDGYPVDWNN…VEIKGYGRCR (61 aa)). 4 disulfide bridges follow: Cys26-Cys75, Cys30-Cys51, Cys37-Cys58, and Cys41-Cys60.

It belongs to the long (4 C-C) scorpion toxin superfamily. Sodium channel inhibitor family. Alpha subfamily. As to expression, expressed by the venom gland.

It localises to the secreted. Its function is as follows. Binds voltage-independently at site-3 of voltage-gated sodium channels (Nav) and inhibits the inactivation of the activated channels, thereby blocking neuronal transmission. In Lychas mucronatus (Chinese swimming scorpion), this protein is Neurotoxin LmNaTx21.1.